The sequence spans 230 residues: UPF0173 metal-dependent hydrolase Mbar_A3716 (230 aa).

The protein belongs to the UPF0173 family.

In Methanosarcina barkeri (strain Fusaro / DSM 804), this protein is UPF0173 metal-dependent hydrolase Mbar_A3716.